A 379-amino-acid chain; its full sequence is uncharacterized protein (379 aa).

Disordered regions lie at residues 1–37 (MSSI…SGQT), 130–150 (VRYS…LSPE), and 332–379 (NPPI…RGSR).

Belongs to the chlamydial CPn_0499/CT_392/TC_0671 family.

This is an uncharacterized protein from Chlamydia muridarum (strain MoPn / Nigg).